The sequence spans 415 residues: Probable G-protein coupled receptor 19 (415 aa).

Residues Met1–Ser69 lie on the Extracellular side of the membrane. Asn25 and Asn52 each carry an N-linked (GlcNAc...) asparagine glycan. A helical membrane pass occupies residues Ile70–Ile90. Residues His91–Tyr102 are Cytoplasmic-facing. The helical transmembrane segment at Phe103–Leu123 threads the bilayer. Over Leu124–Tyr143 the chain is Extracellular. Cysteines 138 and 210 form a disulfide. A helical membrane pass occupies residues Phe144–Ile161. Over Asp162–Lys182 the chain is Cytoplasmic. Residues Met183–Gly203 traverse the membrane as a helical segment. The Extracellular portion of the chain corresponds to Ser204–Thr221. A helical transmembrane segment spans residues Ala222 to Phe242. The Cytoplasmic segment spans residues Tyr243–Met277. A helical membrane pass occupies residues Phe278 to Trp298. At His299–Ser309 the chain is on the extracellular side. A helical membrane pass occupies residues Leu310–Ser325. The Cytoplasmic portion of the chain corresponds to Lys326–Val415.

The protein belongs to the G-protein coupled receptor 1 family. As to expression, abundant expression in the brain.

It is found in the cell membrane. Functionally, G-protein coupled receptor that plays a role in the regulation of circadian rhythms and energy metabolism. Participates in maintaining proper circadian gene expression in the suprachiasmatic nucleus (SCN), the locus of the master circadian clock in the brain. May function as a coordinator of aging-associated metabolic dysfunction, stress response, DNA integrity management, and eventual senescence. Upon binding to adropin, modulates mitochondrial energy metabolism via the p44/42-PDK4 signaling pathway, influencing pyruvate dehydrogenase activity. This is Probable G-protein coupled receptor 19 (GPR19) from Homo sapiens (Human).